Here is a 38-residue protein sequence, read N- to C-terminus: Photosystem II reaction center protein L (38 aa).

The helical transmembrane segment at 17–37 threads the bilayer; sequence SLFWGLLLIFVLAVLFSSYFF.

Belongs to the PsbL family. PSII is composed of 1 copy each of membrane proteins PsbA, PsbB, PsbC, PsbD, PsbE, PsbF, PsbH, PsbI, PsbJ, PsbK, PsbL, PsbM, PsbT, PsbX, PsbY, PsbZ, Psb30/Ycf12, at least 3 peripheral proteins of the oxygen-evolving complex and a large number of cofactors. It forms dimeric complexes.

Its subcellular location is the plastid. The protein localises to the chloroplast thylakoid membrane. One of the components of the core complex of photosystem II (PSII). PSII is a light-driven water:plastoquinone oxidoreductase that uses light energy to abstract electrons from H(2)O, generating O(2) and a proton gradient subsequently used for ATP formation. It consists of a core antenna complex that captures photons, and an electron transfer chain that converts photonic excitation into a charge separation. This subunit is found at the monomer-monomer interface and is required for correct PSII assembly and/or dimerization. The sequence is that of Photosystem II reaction center protein L from Zygnema circumcarinatum (Green alga).